The primary structure comprises 276 residues: Rhomboid protease GlpG (276 aa).

The next 6 membrane-spanning stretches (helical) occupy residues 94–114 (GPVT…MSLI), 142–162 (IFMH…WYLG), 169–189 (LGSG…GYVQ), 192–212 (FSGP…GYVW), 229–249 (LIIF…GMSM), and 250–270 (ANGA…VDTL). The active-site Nucleophile is serine 201. Histidine 254 is a catalytic residue.

It belongs to the peptidase S54 family.

Its subcellular location is the cell inner membrane. The enzyme catalyses Cleaves type-1 transmembrane domains using a catalytic dyad composed of serine and histidine that are contributed by different transmembrane domains.. Functionally, rhomboid-type serine protease that catalyzes intramembrane proteolysis. The polypeptide is Rhomboid protease GlpG (Salmonella typhi).